Consider the following 359-residue polypeptide: Serpentine receptor class epsilon-33 (359 aa).

Transmembrane regions (helical) follow at residues 29 to 49 (VIIS…VNVS), 65 to 85 (ILAL…FITI), 134 to 156 (YMYS…SVLI), 168 to 188 (PAIL…GLLF), 194 to 214 (LSAH…YVFV), 255 to 275 (LVFA…ALHY), and 285 to 305 (LIEN…MLSI).

It belongs to the nematode receptor-like protein sre family.

The protein resides in the membrane. The protein is Serpentine receptor class epsilon-33 (sre-33) of Caenorhabditis elegans.